Consider the following 154-residue polypeptide: Ribosome maturation factor RimP (154 aa).

The protein belongs to the RimP family.

The protein localises to the cytoplasm. In terms of biological role, required for maturation of 30S ribosomal subunits. The protein is Ribosome maturation factor RimP of Salmonella agona (strain SL483).